The following is a 300-amino-acid chain: UDP-N-acetylenolpyruvoylglucosamine reductase (300 aa).

Positions 29 to 193 (TGGPADLLVF…LSATFKLRSG (165 aa)) constitute an FAD-binding PCMH-type domain. Arginine 172 is a catalytic residue. Serine 222 serves as the catalytic Proton donor. Glutamate 292 is a catalytic residue.

Belongs to the MurB family. It depends on FAD as a cofactor.

It is found in the cytoplasm. The catalysed reaction is UDP-N-acetyl-alpha-D-muramate + NADP(+) = UDP-N-acetyl-3-O-(1-carboxyvinyl)-alpha-D-glucosamine + NADPH + H(+). Its pathway is cell wall biogenesis; peptidoglycan biosynthesis. Functionally, cell wall formation. This is UDP-N-acetylenolpyruvoylglucosamine reductase from Pediococcus pentosaceus (strain ATCC 25745 / CCUG 21536 / LMG 10740 / 183-1w).